A 170-amino-acid polypeptide reads, in one-letter code: NADH-quinone oxidoreductase subunit B (170 aa).

Cys37, Cys38, Cys102, and Cys131 together coordinate [4Fe-4S] cluster.

It belongs to the complex I 20 kDa subunit family. As to quaternary structure, NDH-1 is composed of 14 different subunits. Subunits NuoB, C, D, E, F, and G constitute the peripheral sector of the complex. It depends on [4Fe-4S] cluster as a cofactor.

It is found in the cell inner membrane. The catalysed reaction is a quinone + NADH + 5 H(+)(in) = a quinol + NAD(+) + 4 H(+)(out). Its function is as follows. NDH-1 shuttles electrons from NADH, via FMN and iron-sulfur (Fe-S) centers, to quinones in the respiratory chain. The immediate electron acceptor for the enzyme in this species is believed to be ubiquinone. Couples the redox reaction to proton translocation (for every two electrons transferred, four hydrogen ions are translocated across the cytoplasmic membrane), and thus conserves the redox energy in a proton gradient. This Citrifermentans bemidjiense (strain ATCC BAA-1014 / DSM 16622 / JCM 12645 / Bem) (Geobacter bemidjiensis) protein is NADH-quinone oxidoreductase subunit B.